Reading from the N-terminus, the 122-residue chain is Large ribosomal subunit protein uL14 (122 aa).

It belongs to the universal ribosomal protein uL14 family. As to quaternary structure, part of the 50S ribosomal subunit. Forms a cluster with proteins L3 and L19. In the 70S ribosome, L14 and L19 interact and together make contacts with the 16S rRNA in bridges B5 and B8.

Functionally, binds to 23S rRNA. Forms part of two intersubunit bridges in the 70S ribosome. This chain is Large ribosomal subunit protein uL14, found in Clostridium botulinum (strain Alaska E43 / Type E3).